Reading from the N-terminus, the 215-residue chain is Ribonuclease HII (215 aa).

The RNase H type-2 domain maps to Gly24 to Asp215. Residues Asp30, Glu31, and Asp125 each coordinate a divalent metal cation.

This sequence belongs to the RNase HII family. It depends on Mn(2+) as a cofactor. Mg(2+) is required as a cofactor.

It localises to the cytoplasm. It carries out the reaction Endonucleolytic cleavage to 5'-phosphomonoester.. Functionally, endonuclease that specifically degrades the RNA of RNA-DNA hybrids. The chain is Ribonuclease HII from Zymomonas mobilis subsp. mobilis (strain ATCC 31821 / ZM4 / CP4).